A 274-amino-acid chain; its full sequence is Bis(5'-nucleosyl)-tetraphosphatase, symmetrical (274 aa).

Belongs to the Ap4A hydrolase family.

It catalyses the reaction P(1),P(4)-bis(5'-adenosyl) tetraphosphate + H2O = 2 ADP + 2 H(+). Hydrolyzes diadenosine 5',5'''-P1,P4-tetraphosphate to yield ADP. The chain is Bis(5'-nucleosyl)-tetraphosphatase, symmetrical from Shewanella sp. (strain ANA-3).